A 323-amino-acid polypeptide reads, in one-letter code: Methionyl-tRNA formyltransferase (323 aa).

Ser-121–Pro-124 lines the (6S)-5,6,7,8-tetrahydrofolate pocket.

It belongs to the Fmt family.

The catalysed reaction is L-methionyl-tRNA(fMet) + (6R)-10-formyltetrahydrofolate = N-formyl-L-methionyl-tRNA(fMet) + (6S)-5,6,7,8-tetrahydrofolate + H(+). Its function is as follows. Attaches a formyl group to the free amino group of methionyl-tRNA(fMet). The formyl group appears to play a dual role in the initiator identity of N-formylmethionyl-tRNA by promoting its recognition by IF2 and preventing the misappropriation of this tRNA by the elongation apparatus. This chain is Methionyl-tRNA formyltransferase, found in Desulfotalea psychrophila (strain LSv54 / DSM 12343).